The primary structure comprises 267 residues: uncharacterized protein (267 aa).

This sequence belongs to the glycosyltransferase 2 family.

This is an uncharacterized protein from Haemophilus influenzae (strain ATCC 51907 / DSM 11121 / KW20 / Rd).